A 333-amino-acid chain; its full sequence is Coiled-coil domain-containing protein 68 (333 aa).

2 coiled-coil regions span residues 86–120 (LDLL…SREA) and 160–302 (EKEQ…HWTE).

As to quaternary structure, interacts with CEP170.

The protein localises to the cytoplasm. It is found in the cytoskeleton. It localises to the microtubule organizing center. The protein resides in the centrosome. Its subcellular location is the centriole. In terms of biological role, centriolar protein required for centriole subdistal appendage assembly and microtubule anchoring in interphase cells. Together with CCDC120, cooperate with subdistal appendage components ODF2, NIN and CEP170 for hierarchical subdistal appendage assembly. In Mus musculus (Mouse), this protein is Coiled-coil domain-containing protein 68 (Ccdc68).